We begin with the raw amino-acid sequence, 403 residues long: MLRWTTAGESHGQALVALIEHMPAGVPISQDDIALQLSRRRLGYGRGARMKFEADDLTLLSGIRHGLTLGSPIAIMIGNTEWPKWTTIMSPEALDLEDPEVAKAMASGRGAPLTRPRPGHADFAGMVKFDHSEARPILERSSARETAARVAAATVARNFLRETLGVEVLSHVISIGASAPYKGPHPSFADIEAIDASPVRACDKTAEESMISEIETAKKQGDTLGGIVEVIVEGLPIGLGSHTSGEDRLDAQLAAALMGIQAIKGVEVGDGFAEARRRGSEAHDEMVRTDEGVDRETNRAGGLEGGMTNGQTLRLRAAMKPISTVPRALKTVDMSTGGSATAIHQRSDVCAVPAAGVVAEAMVALVLARAVLEKFGGDSLAETKRNIAAYQEYVAGRLEWGEA.

NADP(+) is bound by residues Arg40 and Arg46. Residues 140–142 (RSS) and 261–262 (QA) each bind FMN. Over residues 277-298 (RRGSEAHDEMVRTDEGVDRETN) the composition is skewed to basic and acidic residues. The segment at 277–307 (RRGSEAHDEMVRTDEGVDRETNRAGGLEGGM) is disordered. FMN-binding positions include Gly305, 320–324 (KPIST), and Arg346.

This sequence belongs to the chorismate synthase family. As to quaternary structure, homotetramer. FMNH2 serves as cofactor.

The catalysed reaction is 5-O-(1-carboxyvinyl)-3-phosphoshikimate = chorismate + phosphate. The protein operates within metabolic intermediate biosynthesis; chorismate biosynthesis; chorismate from D-erythrose 4-phosphate and phosphoenolpyruvate: step 7/7. Its function is as follows. Catalyzes the anti-1,4-elimination of the C-3 phosphate and the C-6 proR hydrogen from 5-enolpyruvylshikimate-3-phosphate (EPSP) to yield chorismate, which is the branch point compound that serves as the starting substrate for the three terminal pathways of aromatic amino acid biosynthesis. This reaction introduces a second double bond into the aromatic ring system. The chain is Chorismate synthase from Corynebacterium aurimucosum (strain ATCC 700975 / DSM 44827 / CIP 107346 / CN-1) (Corynebacterium nigricans).